Here is a 540-residue protein sequence, read N- to C-terminus: GMP synthase [glutamine-hydrolyzing] (540 aa).

The Glutamine amidotransferase type-1 domain maps to Ile26–Thr216. Residue Cys103 is the Nucleophile of the active site. Catalysis depends on residues His190 and Glu192. The 199-residue stretch at Trp217–Arg415 folds into the GMPS ATP-PPase domain. Ser244–Ser250 is an ATP binding site.

In terms of assembly, homodimer.

The enzyme catalyses XMP + L-glutamine + ATP + H2O = GMP + L-glutamate + AMP + diphosphate + 2 H(+). It participates in purine metabolism; GMP biosynthesis; GMP from XMP (L-Gln route): step 1/1. Functionally, catalyzes the synthesis of GMP from XMP. In Nostoc sp. (strain PCC 7120 / SAG 25.82 / UTEX 2576), this protein is GMP synthase [glutamine-hydrolyzing].